The following is a 132-amino-acid chain: Small ribosomal subunit protein uS8 (132 aa).

It belongs to the universal ribosomal protein uS8 family. As to quaternary structure, part of the 30S ribosomal subunit. Contacts proteins S5 and S12.

One of the primary rRNA binding proteins, it binds directly to 16S rRNA central domain where it helps coordinate assembly of the platform of the 30S subunit. In Lactobacillus helveticus (strain DPC 4571), this protein is Small ribosomal subunit protein uS8.